Reading from the N-terminus, the 531-residue chain is Cytochrome P450 monooxygenase ffsD (531 aa).

Residues 40-60 form a helical membrane-spanning segment; that stretch reads VGALLGISLSVVLLLWVISVV. C475 is a binding site for heme.

The protein belongs to the cytochrome P450 family. Heme serves as cofactor.

The protein resides in the membrane. It functions in the pathway mycotoxin biosynthesis. Its function is as follows. Cytochrome P450 monooxygenase; part of the gene cluster that mediates the biosynthesis of the cytotoxic leucine-containing cytochalasans, including aspochalasin C, aspochalasin E, TMC-169, flavichalasine F, aspergillin PZ, aspochalasin M and flavichalasine G. The first step in the pathway is catalyzed by the hybrid PKS-NRPS ffsA that utilizes 8 units of malonyl-CoA to iteratively assemble the octaketide chain before addition of L-leucine by the C-terminal NRPS modules. Because ffsA lacks a designated enoylreductase (ER) domain, the required activity is provided the enoyl reductase fssC. The methyltransferase (MT) domain of ffsA catalyzes the alpha-methylation at C10 and C14 using S-adenosyl-L-methionine as the methyl-donating cosubstrate. Reduction by the hydrolyase ffsE, followed by dehydration and intra-molecular Diels-Alder cyclization by the Diels-Alderase ffsF then yield the required isoindolone-fused macrocycle. A number of oxidative steps catalyzed by the tailoring cytochrome P450 monooxygenase ffsD, the FAD-linked oxidoreductase ffsJ and the short-chain dehydrogenase/reductase ffsI, are further required to afford the final products. This is Cytochrome P450 monooxygenase ffsD from Aspergillus flavipes.